A 231-amino-acid chain; its full sequence is DNA mismatch repair protein MutH (231 aa).

Belongs to the MutH family.

The protein localises to the cytoplasm. Sequence-specific endonuclease that cleaves unmethylated GATC sequences. It is involved in DNA mismatch repair. The sequence is that of DNA mismatch repair protein MutH from Salmonella paratyphi C (strain RKS4594).